The chain runs to 117 residues: Structural toxin peptide sea anemone type 9a (117 aa).

An N-terminal signal peptide occupies residues 1-23; the sequence is MKTIIAIFSLAAMIVLVRPTPLE. 3 tandem repeats follow at residues 28-56, 57-88, and 89-117. The tract at residues 29–117 is 3 X approximate tandem repeats; sequence RSIINVPCKK…GKCRKIHGCS (89 aa).

Contains 6 disulfide bonds. As to expression, expressed outside of acontia.

It is found in the secreted. The protein localises to the nematocyst. In terms of biological role, putative neurotoxin. The polypeptide is Structural toxin peptide sea anemone type 9a (Calliactis polypus (Hermit crab anemone)).